The sequence spans 171 residues: RNA silencing suppressor p19 (171 aa).

Over residues 1-15 (MERAIPGNDTREPAY) the composition is skewed to basic and acidic residues. Residues 1-32 (MERAIPGNDTREPAYGERWNGGPGGSTSPFQL) form a disordered region.

It belongs to the tombusvirus protein p19 family. Homodimer.

Functionally, viral suppressor of RNA silencing which binds specifically to silencing RNAs (siRNAs). Acts as a molecular caliper to specifically select siRNAs based on the length of the duplex region of the RNA. This chain is RNA silencing suppressor p19, found in Capsicum annuum (Capsicum pepper).